Consider the following 555-residue polypeptide: Urocanate hydratase (555 aa).

NAD(+)-binding positions include Gly52–Gly53, Gln130, Gly176–Gly178, Glu196, Arg201, Asn242–Ala243, Gln263–His267, Tyr273–Leu274, and Tyr322. Cys410 is a catalytic residue. Residue Gly492 coordinates NAD(+).

It belongs to the urocanase family. Requires NAD(+) as cofactor.

It localises to the cytoplasm. It carries out the reaction 4-imidazolone-5-propanoate = trans-urocanate + H2O. Its pathway is amino-acid degradation; L-histidine degradation into L-glutamate; N-formimidoyl-L-glutamate from L-histidine: step 2/3. Its function is as follows. Catalyzes the conversion of urocanate to 4-imidazolone-5-propionate. In Shewanella baltica (strain OS223), this protein is Urocanate hydratase.